The primary structure comprises 271 residues: Putative phosphoenolpyruvate synthase regulatory protein (271 aa).

Position 152–159 (152–159 (GVSRCGKT)) interacts with ADP.

Belongs to the pyruvate, phosphate/water dikinase regulatory protein family. PSRP subfamily.

The enzyme catalyses [pyruvate, water dikinase] + ADP = [pyruvate, water dikinase]-phosphate + AMP + H(+). It carries out the reaction [pyruvate, water dikinase]-phosphate + phosphate + H(+) = [pyruvate, water dikinase] + diphosphate. Bifunctional serine/threonine kinase and phosphorylase involved in the regulation of the phosphoenolpyruvate synthase (PEPS) by catalyzing its phosphorylation/dephosphorylation. The sequence is that of Putative phosphoenolpyruvate synthase regulatory protein from Legionella pneumophila (strain Paris).